Reading from the N-terminus, the 542-residue chain is Peptide chain release factor 3 (542 aa).

In terms of domain architecture, tr-type G spans 11-279 (EKRRTFAIIS…AYVEYAPSPR (269 aa)). GTP-binding positions include 20 to 27 (SHPDAGKT), 88 to 92 (DTPGH), and 142 to 145 (NKLD).

Belongs to the TRAFAC class translation factor GTPase superfamily. Classic translation factor GTPase family. PrfC subfamily.

Its subcellular location is the cytoplasm. Its function is as follows. Increases the formation of ribosomal termination complexes and stimulates activities of RF-1 and RF-2. It binds guanine nucleotides and has strong preference for UGA stop codons. It may interact directly with the ribosome. The stimulation of RF-1 and RF-2 is significantly reduced by GTP and GDP, but not by GMP. This is Peptide chain release factor 3 from Nitrosococcus oceani (strain ATCC 19707 / BCRC 17464 / JCM 30415 / NCIMB 11848 / C-107).